The sequence spans 264 residues: Thymidylate synthase (264 aa).

Arg21 is a binding site for dUMP. His51 provides a ligand contact to (6R)-5,10-methylene-5,6,7,8-tetrahydrofolate. 126–127 (RR) lines the dUMP pocket. Residue Cys146 is the Nucleophile of the active site. Residues 166-169 (RSAD), Asn177, and 207-209 (HLY) contribute to the dUMP site. Asp169 contributes to the (6R)-5,10-methylene-5,6,7,8-tetrahydrofolate binding site. Ser263 serves as a coordination point for (6R)-5,10-methylene-5,6,7,8-tetrahydrofolate.

Belongs to the thymidylate synthase family. Bacterial-type ThyA subfamily. Homodimer.

It is found in the cytoplasm. It carries out the reaction dUMP + (6R)-5,10-methylene-5,6,7,8-tetrahydrofolate = 7,8-dihydrofolate + dTMP. Its pathway is pyrimidine metabolism; dTTP biosynthesis. In terms of biological role, catalyzes the reductive methylation of 2'-deoxyuridine-5'-monophosphate (dUMP) to 2'-deoxythymidine-5'-monophosphate (dTMP) while utilizing 5,10-methylenetetrahydrofolate (mTHF) as the methyl donor and reductant in the reaction, yielding dihydrofolate (DHF) as a by-product. This enzymatic reaction provides an intracellular de novo source of dTMP, an essential precursor for DNA biosynthesis. In Neisseria meningitidis serogroup C / serotype 2a (strain ATCC 700532 / DSM 15464 / FAM18), this protein is Thymidylate synthase.